The sequence spans 957 residues: Glycine dehydrogenase (decarboxylating) (957 aa).

At lysine 708 the chain carries N6-(pyridoxal phosphate)lysine.

Belongs to the GcvP family. In terms of assembly, the glycine cleavage system is composed of four proteins: P, T, L and H. Pyridoxal 5'-phosphate is required as a cofactor.

It catalyses the reaction N(6)-[(R)-lipoyl]-L-lysyl-[glycine-cleavage complex H protein] + glycine + H(+) = N(6)-[(R)-S(8)-aminomethyldihydrolipoyl]-L-lysyl-[glycine-cleavage complex H protein] + CO2. The glycine cleavage system catalyzes the degradation of glycine. The P protein binds the alpha-amino group of glycine through its pyridoxal phosphate cofactor; CO(2) is released and the remaining methylamine moiety is then transferred to the lipoamide cofactor of the H protein. This chain is Glycine dehydrogenase (decarboxylating), found in Shigella dysenteriae serotype 1 (strain Sd197).